The sequence spans 270 residues: Phosphonates import ATP-binding protein PhnC 2 (270 aa).

The ABC transporter domain maps to 2–245 (LVVEGLTCRF…IARELYDLEA (244 aa)). 34–41 (GRSGAGKS) lines the ATP pocket.

Belongs to the ABC transporter superfamily. Phosphonates importer (TC 3.A.1.9.1) family. In terms of assembly, the complex is composed of two ATP-binding proteins (PhnC), two transmembrane proteins (PhnE) and a solute-binding protein (PhnD).

It localises to the cell inner membrane. It carries out the reaction phosphonate(out) + ATP + H2O = phosphonate(in) + ADP + phosphate + H(+). In terms of biological role, part of the ABC transporter complex PhnCDE involved in phosphonates import. Responsible for energy coupling to the transport system. This chain is Phosphonates import ATP-binding protein PhnC 2, found in Rhodopseudomonas palustris (strain BisA53).